A 481-amino-acid chain; its full sequence is Aspartyl/glutamyl-tRNA(Asn/Gln) amidotransferase subunit B (481 aa).

Belongs to the GatB/GatE family. GatB subfamily. In terms of assembly, heterotrimer of A, B and C subunits.

It catalyses the reaction L-glutamyl-tRNA(Gln) + L-glutamine + ATP + H2O = L-glutaminyl-tRNA(Gln) + L-glutamate + ADP + phosphate + H(+). It carries out the reaction L-aspartyl-tRNA(Asn) + L-glutamine + ATP + H2O = L-asparaginyl-tRNA(Asn) + L-glutamate + ADP + phosphate + 2 H(+). In terms of biological role, allows the formation of correctly charged Asn-tRNA(Asn) or Gln-tRNA(Gln) through the transamidation of misacylated Asp-tRNA(Asn) or Glu-tRNA(Gln) in organisms which lack either or both of asparaginyl-tRNA or glutaminyl-tRNA synthetases. The reaction takes place in the presence of glutamine and ATP through an activated phospho-Asp-tRNA(Asn) or phospho-Glu-tRNA(Gln). The protein is Aspartyl/glutamyl-tRNA(Asn/Gln) amidotransferase subunit B of Marinomonas sp. (strain MWYL1).